The primary structure comprises 284 residues: Short chain dehydrogenase/reductase AacuD (284 aa).

Valine 37 provides a ligand contact to NADP(+). Catalysis depends on proton donor residues serine 166 and tyrosine 180. The NADP(+) site is built by tyrosine 180, lysine 184, and threonine 215. Lysine 184 functions as the Lowers pKa of active site Tyr in the catalytic mechanism.

Belongs to the short-chain dehydrogenases/reductases (SDR) family.

The protein operates within secondary metabolite biosynthesis. In terms of biological role, short chain dehydrogenase/reductase; part of the gene cluster that mediates the biosynthesis of the tetrahydroxanthone dimer secalonic acid D. The pathway begins with the synthesis of atrochrysone thioester by the polyketide synthase AacuL. The atrochrysone carboxyl ACP thioesterase AacuM then breaks the thioester bond and releases the atrochrysone carboxylic acid from AacuL. Atrochrysone carboxylic acid is decarboxylated by the decarboxylase AacuI, and oxidized by the anthrone oxygenase AacuG to yield emodin. Emodin is then reduced to emodin hydroquinone by a yet unidentified oxidoreductase. A-ring reduction by the short chain dehydrogenase AacuN, dehydration by the scytalone dehydratase-like protein AacuK and probable spontaneous re-oxidation, results in overall deoxygenation to chrysophanol. Baeyer-Villiger oxidation by the Baeyer-Villiger monooxygenase (BVMO) AacuH then yields monodictyphenone. Monodictyphenone is transformed into compounds with the tetrahydroxanthone skeleton via methylesterification by the methyltransferase AacuQ, followed by the action of the flavin-dependent monooxygenase AacuC, the isomerase AacuP, and the short chain dehydrogenase/reductase AacuF or AacuD. AacuF and AacuD should accept the same compound as a substrate but perform the ketoreduction with a different stereoselectivity, thus yielding blennolides B and A, respectively. In the final step of the biosynthesis, the cytochrome P450 monooxygenase AacuE accepts blennolide B and/or blennolide A to conduct the dimerization reaction to furnish the tetrahydroxanthone dimers, secalonic acids D, B, and F. The chain is Short chain dehydrogenase/reductase AacuD from Aspergillus aculeatus (strain ATCC 16872 / CBS 172.66 / WB 5094).